A 618-amino-acid chain; its full sequence is Medium-chain acyl-CoA ligase ACSF2, mitochondrial (618 aa).

A mitochondrion-targeting transit peptide spans 1–44 (MRATAAYVGMLRLGRMCAGSPGVLGARAALSRSWQEARLQAVRF). Lysine 182 is subject to N6-acetyllysine. An N6-acetyllysine; alternate modification is found at lysine 185. Lysine 185 carries the post-translational modification N6-succinyllysine; alternate. 266–274 (TSGTTGSPK) is a binding site for ATP. 2 positions are modified to N6-acetyllysine: lysine 343 and lysine 401. At lysine 481 the chain carries N6-succinyllysine. ATP is bound by residues aspartate 496 and arginine 511. Position 513 is an N6-acetyllysine (lysine 513). N6-acetyllysine; alternate is present on residues lysine 547 and lysine 573. Lysine 547 and lysine 573 each carry N6-succinyllysine; alternate. Lysine 602 provides a ligand contact to ATP. The residue at position 602 (lysine 602) is an N6-succinyllysine.

Belongs to the ATP-dependent AMP-binding enzyme family.

It is found in the mitochondrion. The catalysed reaction is a medium-chain fatty acid + ATP + CoA = a medium-chain fatty acyl-CoA + AMP + diphosphate. It carries out the reaction octanoate + ATP + CoA = octanoyl-CoA + AMP + diphosphate. Functionally, acyl-CoA synthases catalyze the initial reaction in fatty acid metabolism, by forming a thioester with CoA. Has some preference toward medium-chain substrates. Plays a role in adipocyte differentiation. The protein is Medium-chain acyl-CoA ligase ACSF2, mitochondrial of Macaca fascicularis (Crab-eating macaque).